Here is a 216-residue protein sequence, read N- to C-terminus: Uracil phosphoribosyltransferase (216 aa).

30–34 (KNLVR) contacts GTP. Residues Arg80, Arg105, and 140–148 (DPMIATAST) each bind 5-phospho-alpha-D-ribose 1-diphosphate. Uracil-binding positions include Ile203 and 208–210 (GDA). Residue Asp209 coordinates 5-phospho-alpha-D-ribose 1-diphosphate.

This sequence belongs to the UPRTase family. It depends on Mg(2+) as a cofactor.

The enzyme catalyses UMP + diphosphate = 5-phospho-alpha-D-ribose 1-diphosphate + uracil. The protein operates within pyrimidine metabolism; UMP biosynthesis via salvage pathway; UMP from uracil: step 1/1. Its activity is regulated as follows. Allosterically activated by GTP. Catalyzes the conversion of uracil and 5-phospho-alpha-D-ribose 1-diphosphate (PRPP) to UMP and diphosphate. This is Uracil phosphoribosyltransferase from Saccharolobus islandicus (strain Y.N.15.51 / Yellowstone #2) (Sulfolobus islandicus).